We begin with the raw amino-acid sequence, 316 residues long: NAC domain-containing protein 22 (316 aa).

Residues 17 to 170 enclose the NAC domain; that stretch reads DLPGFRFHPT…DMVLCKIYRK (154 aa). Residues 117–176 mediate DNA binding; it reads IGLKKTLVFYQGRAPRGTKTDWVMNEYRLPDYGAARAAAPPPKEDMVLCKIYRKATPLKE. Residues 229 to 260 form a disordered region; sequence QSSSSSAAPSGSSSKNGGAGAPREAKKEEADV. Residues 230–244 show a composition bias toward low complexity; the sequence is SSSSSAAPSGSSSKN.

It is found in the nucleus. In terms of biological role, transcription activator that binds sequence-specific DNA motifs. Involved in stress response. Plays a positive role in drought and salt stress tolerance through the modulation of abscisic acid-mediated signaling. The protein is NAC domain-containing protein 22 of Oryza sativa subsp. japonica (Rice).